The following is a 188-amino-acid chain: UPF0301 protein XOO1309 (188 aa).

This sequence belongs to the UPF0301 (AlgH) family.

The protein is UPF0301 protein XOO1309 of Xanthomonas oryzae pv. oryzae (strain MAFF 311018).